We begin with the raw amino-acid sequence, 75 residues long: UPF0270 protein PSPTO_1630 (75 aa).

The protein belongs to the UPF0270 family.

This is UPF0270 protein PSPTO_1630 from Pseudomonas syringae pv. tomato (strain ATCC BAA-871 / DC3000).